We begin with the raw amino-acid sequence, 536 residues long: Interferon alpha/beta receptor 2 (536 aa).

The N-terminal stretch at 1-26 (MLLSQNVSAIGPLNLYPMVHISLVFG) is a signal peptide. Over 27-246 (ISYVVPDLSD…RESESSEPAT (220 aa)) the chain is Extracellular. Disulfide bonds link Cys-39–Cys-122 and Cys-85–Cys-93. N-linked (GlcNAc...) asparagine glycosylation is found at Asn-58, Asn-87, Asn-101, Asn-147, and Asn-191. Cysteines 210 and 230 form a disulfide. Residues 247-267 (IGGILILFLLAAVCISTVMIL) form a helical membrane-spanning segment. Residues 268-536 (KRIGYICLRN…VRQVNLKNFN (269 aa)) are Cytoplasmic-facing. The residue at position 340 (Tyr-340) is a Phosphotyrosine. 3 consecutive repeat copies span residues 358–362 (SLEDC), 363–367 (SLEDC), and 368–372 (SLEDC). The tract at residues 358–372 (SLEDCSLEDCSLEDC) is 3 X 5 AA tandem repeats of S-L-E-D-C. A disordered region spans residues 369-434 (LEDCSDPSAE…SDSTEGSEGR (66 aa)). A compositionally biased stretch (acidic residues) spans 420–429 (TSEEDSDSTE). The interval 432-456 (EGRIVFNVNLNSVCVRALEDDKDSE) is mediates interaction with STAT2 (and required for the recruitment of USP18). Ser-480 is subject to Phosphoserine. Residues 487 to 522 (EEGTQLPFTDPSMECLRPQDALSDKSDTSESDVDIG) are disordered. Tyr-525 is modified (phosphotyrosine).

This sequence belongs to the type II cytokine receptor family. In terms of assembly, heterodimer with IFNAR1; forming the receptor for type I interferon. Interacts with the transcriptional factors STAT1 and STAT2. Interacts with JAK1. Interacts with USP18; indirectly via STAT2, it negatively regulates the assembly of the ternary interferon-IFNAR1-IFNAR2 complex and therefore type I interferon signaling. In terms of processing, phosphorylated on tyrosine residues upon interferon binding. Phosphorylation at Tyr-340 or Tyr-525 are sufficient to mediate interferon dependent activation of STAT1, STAT2 and STAT3 leading to antiproliferative effects on many different cell types. Expressed in the endometrium. Expressed in all tissues examined except conceptus at day 15 of pregnancy.

Its subcellular location is the cell membrane. Functionally, together with IFNAR1, forms the heterodimeric receptor for type I interferons (including interferons alpha, beta, epsilon, omega and kappa). Type I interferon binding activates the JAK-STAT signaling cascade, resulting in transcriptional activation or repression of interferon-regulated genes that encode the effectors of the interferon response. Mechanistically, type I interferon-binding brings the IFNAR1 and IFNAR2 subunits into close proximity with one another, driving their associated Janus kinases (JAKs) (TYK2 bound to IFNAR1 and JAK1 bound to IFNAR2) to cross-phosphorylate one another. The activated kinases phosphorylate specific tyrosine residues on the intracellular domains of IFNAR1 and IFNAR2, forming docking sites for the STAT transcription factors (STAT1, STAT2 and STAT). STAT proteins are then phosphorylated by the JAKs, promoting their translocation into the nucleus to regulate expression of interferon-regulated genes. In Ovis aries (Sheep), this protein is Interferon alpha/beta receptor 2 (IFNAR2).